Here is an 890-residue protein sequence, read N- to C-terminus: MTDVTIKTLAAERQTSVERLVQQFADAGIRKSADDSVSAQEKQTLIDHLNQKNSGPDKLTLQRKTRSTLNIPGTGGKSKSVQIEVRKKRTFVKRDPQEAERLAAEEQAQREAEEQARREAEESAKREAQQKAEREAAEQAKREAAEQAKREAAEKDKVSNQQDDMTKNAQAEKARREQEAAELKRKAEEEARRKLEEEARRVAEEARRMAEENKWIDNAEPTEDSSDYHVTTSQHARQAEDESDREVEGGRGRGRNAKAARPKKGNKHAESKADREEARAAVRGGKGGKRKGSSLQQGFQKPAQAVNRDVVIGETITVGELANKMAVKGSQVIKAMMKLGAMATINQVIDQETAQLVAEEMGHKVILRRENELEEAVMSDRDTGAAAEPRAPVVTIMGHVDHGKTSLLDYIRSTKVASGEAGGITQHIGAYHVETENGMITFLDTPGHAAFTSMRARGAQATDIVVLVVAADDGVMPQTIEAIQHAKAAGVPVVVAVNKIDKPEADPDRVKNELSQYGILPEEWGGESQFVHVSAKAGTGIDELLDAILLQAEVLELKAVRKGMASGAVIESFLDKGRGPVATVLVREGTLHKGDIVLCGFEYGRVRAMRNELGQEVLEAGPSIPVEILGLSGVPAAGDEVTVVRDEKKAREVALYRQGKFREVKLARQQKSKLENMFANMTEGEVHEVNIVLKADVQGSVEAISDSLLKLSTDEVKVKIIGSGVGGITETDATLAAASNAILVGFNVRADASARKVIEAESLDLRYYSVIYNLIDEVKAAMSGMLSPELKQQIIGLAEVRDVFKSPKFGAIAGCMVTEGVVKRHNPIRVLRDNVVIYEGELESLRRFKDDVNEVRNGMECGIGVKNYNDVRTGDVIEVFEIIEIQRTIA.

The interval 45 to 304 is disordered; the sequence is LIDHLNQKNS…LQQGFQKPAQ (260 aa). Positions 67-81 are enriched in polar residues; it reads STLNIPGTGGKSKSV. Residues 92 to 217 show a composition bias toward basic and acidic residues; sequence VKRDPQEAER…RMAEENKWID (126 aa). A compositionally biased stretch (basic residues) spans 252-266; sequence GRGRNAKAARPKKGN. Positions 267–280 are enriched in basic and acidic residues; it reads KHAESKADREEARA. Positions 389–558 constitute a tr-type G domain; it reads PRAPVVTIMG…LLQAEVLELK (170 aa). Residues 398-405 are G1; that stretch reads GHVDHGKT. GTP is bound at residue 398–405; sequence GHVDHGKT. The segment at 423–427 is G2; sequence GITQH. The interval 444 to 447 is G3; the sequence is DTPG. GTP is bound by residues 444 to 448 and 498 to 501; these read DTPGH and NKID. The interval 498–501 is G4; the sequence is NKID. Residues 534 to 536 form a G5 region; sequence SAK. K808 bears the N6-acetyllysine mark.

Belongs to the TRAFAC class translation factor GTPase superfamily. Classic translation factor GTPase family. IF-2 subfamily.

It is found in the cytoplasm. One of the essential components for the initiation of protein synthesis. Protects formylmethionyl-tRNA from spontaneous hydrolysis and promotes its binding to the 30S ribosomal subunits. Also involved in the hydrolysis of GTP during the formation of the 70S ribosomal complex. In Escherichia coli O81 (strain ED1a), this protein is Translation initiation factor IF-2.